A 154-amino-acid chain; its full sequence is Sperm microtubule associated protein 1 (154 aa).

This Homo sapiens (Human) protein is Sperm microtubule associated protein 1.